The sequence spans 279 residues: Putative Delta(7)-sterol-C5(6)-desaturase 2 (279 aa).

A run of 2 helical transmembrane segments spans residues 48–68 and 127–147; these read LAGN…IYYL and FLCF…IYWV. One can recognise a Fatty acid hydroxylase domain in the interval 134–263; sequence ALYLVLVEFM…TIWMDWMFGS (130 aa). Positions 148-152 match the Histidine box-1 motif; sequence HKELH. The Histidine box-2 motif lies at 162 to 166; the sequence is HATHH. The helical transmembrane segment at 194-214 threads the bilayer; sequence HVIALFIVPIHLITHLSLLFL. The short motif at 239–243 is the Histidine box-3 element; that stretch reads HTIHH.

The protein belongs to the sterol desaturase family. Fe cation is required as a cofactor.

It is found in the endoplasmic reticulum membrane. The catalysed reaction is a Delta(7)-sterol + 2 Fe(II)-[cytochrome b5] + O2 + 2 H(+) = a Delta(5),Delta(7)-sterol + 2 Fe(III)-[cytochrome b5] + 2 H2O. The polypeptide is Putative Delta(7)-sterol-C5(6)-desaturase 2 (HDF7) (Arabidopsis thaliana (Mouse-ear cress)).